Consider the following 129-residue polypeptide: Snaclec coagulation factor IX-binding protein subunit A (129 aa).

Residues 1–129 (DCPSGWSSYE…GQQNPFVCEA (129 aa)) form the C-type lectin domain. 3 disulfides stabilise this stretch: Cys2–Cys13, Cys30–Cys127, and Cys102–Cys119. Ca(2+) contacts are provided by Ser41, Glu43, and Glu47. Glu128 is a binding site for Ca(2+).

This sequence belongs to the snaclec family. In terms of assembly, heterodimer of subunits A and B; disulfide-linked. As to expression, expressed by the venom gland.

The protein localises to the secreted. Functionally, anticoagulant protein which binds to the gamma-carboxyglutamic acid-domain regions of factor IX (F9) (but not factor X) in the presence of calcium with a 1 to 1 stoichiometry. The sequence is that of Snaclec coagulation factor IX-binding protein subunit A from Protobothrops flavoviridis (Habu).